The primary structure comprises 250 residues: 3-deoxy-manno-octulosonate cytidylyltransferase (250 aa).

It belongs to the KdsB family.

It is found in the cytoplasm. It catalyses the reaction 3-deoxy-alpha-D-manno-oct-2-ulosonate + CTP = CMP-3-deoxy-beta-D-manno-octulosonate + diphosphate. It participates in nucleotide-sugar biosynthesis; CMP-3-deoxy-D-manno-octulosonate biosynthesis; CMP-3-deoxy-D-manno-octulosonate from 3-deoxy-D-manno-octulosonate and CTP: step 1/1. The protein operates within bacterial outer membrane biogenesis; lipopolysaccharide biosynthesis. Its function is as follows. Activates KDO (a required 8-carbon sugar) for incorporation into bacterial lipopolysaccharide in Gram-negative bacteria. The polypeptide is 3-deoxy-manno-octulosonate cytidylyltransferase (Francisella tularensis subsp. novicida (strain U112)).